Here is a 416-residue protein sequence, read N- to C-terminus: Adenosylhomocysteinase (416 aa).

3 residues coordinate substrate: Thr-55, Asp-126, and Glu-151. Residue 152–154 coordinates NAD(+); the sequence is TTT. 2 residues coordinate substrate: Lys-181 and Asp-185. Residues Asn-186, 215–220, Glu-238, Asn-273, 294–296, and Asn-341 each bind NAD(+); these read GYGWVG and AGH.

It belongs to the adenosylhomocysteinase family. Requires NAD(+) as cofactor.

The protein localises to the cytoplasm. It carries out the reaction S-adenosyl-L-homocysteine + H2O = L-homocysteine + adenosine. It functions in the pathway amino-acid biosynthesis; L-homocysteine biosynthesis; L-homocysteine from S-adenosyl-L-homocysteine: step 1/1. In terms of biological role, may play a key role in the regulation of the intracellular concentration of adenosylhomocysteine. The chain is Adenosylhomocysteinase from Aeropyrum pernix (strain ATCC 700893 / DSM 11879 / JCM 9820 / NBRC 100138 / K1).